A 101-amino-acid chain; its full sequence is Large ribosomal subunit protein uL24c (101 aa).

It belongs to the universal ribosomal protein uL24 family. As to quaternary structure, part of the 50S ribosomal subunit.

Its subcellular location is the plastid. The protein resides in the chloroplast. One of two assembly initiator proteins, it binds directly to the 5'-end of the 23S rRNA, where it nucleates assembly of the 50S subunit. In Guillardia theta (Cryptophyte), this protein is Large ribosomal subunit protein uL24c (rpl24).